We begin with the raw amino-acid sequence, 453 residues long: MKFSTVILAAGKGTRMHSNMPKVLHTLAGKPMVKHVIDTCNNLGAQNIHLVYGHGGDQMQQALVNENVNWVLQAQQLGTGHAVDQASPHFQDDEKILVLYGDVPLISEDTIESLLEAQPTDGIALLTVVLEDPTGYGRIVRKRGPVVAIVEQKDASEEQKLIKEVNTGVLVATGRDLKRWLAGLNNNNAQGEYYLTDVIAAAHDEGRAVEAVHPSHSIEVEGVNDRIQLARLERAFQARQAKKLLEQGVMLRDPARFDLRGTLQCGSDVEIDVNVIIEGNVSIGNNVVIGAGSILKDCEIDDNTVIRPYSVIEGATVGENCTVGPFTRLRPGAELRDDAHVGNFVEMKNARLGEGSKANHLTYLGDAEIGKGVNVGAGVITCNYDGANKHKTVIGDDVFVGSDCQLVAPVTIGNGATIGAGTTLTKNVAEGELVITRAPERKIAGWQRPAKKK.

Residues 1–226 (MKFSTVILAA…SIEVEGVNDR (226 aa)) form a pyrophosphorylase region. UDP-N-acetyl-alpha-D-glucosamine is bound by residues 8–11 (LAAG), Lys-22, Gln-73, 78–79 (GT), 100–102 (YGD), Gly-137, Glu-151, Asn-166, and Asn-224. Asp-102 serves as a coordination point for Mg(2+). Asn-224 contributes to the Mg(2+) binding site. The tract at residues 227 to 247 (IQLARLERAFQARQAKKLLEQ) is linker. The N-acetyltransferase stretch occupies residues 248-453 (GVMLRDPARF…AGWQRPAKKK (206 aa)). UDP-N-acetyl-alpha-D-glucosamine-binding residues include Arg-330 and Lys-348. The active-site Proton acceptor is His-360. Tyr-363 and Asn-374 together coordinate UDP-N-acetyl-alpha-D-glucosamine. Acetyl-CoA-binding positions include Ala-377, 383-384 (NY), Ser-402, Ala-420, and Arg-437.

It in the N-terminal section; belongs to the N-acetylglucosamine-1-phosphate uridyltransferase family. The protein in the C-terminal section; belongs to the transferase hexapeptide repeat family. As to quaternary structure, homotrimer. Mg(2+) serves as cofactor.

The protein resides in the cytoplasm. The enzyme catalyses alpha-D-glucosamine 1-phosphate + acetyl-CoA = N-acetyl-alpha-D-glucosamine 1-phosphate + CoA + H(+). It catalyses the reaction N-acetyl-alpha-D-glucosamine 1-phosphate + UTP + H(+) = UDP-N-acetyl-alpha-D-glucosamine + diphosphate. It participates in nucleotide-sugar biosynthesis; UDP-N-acetyl-alpha-D-glucosamine biosynthesis; N-acetyl-alpha-D-glucosamine 1-phosphate from alpha-D-glucosamine 6-phosphate (route II): step 2/2. The protein operates within nucleotide-sugar biosynthesis; UDP-N-acetyl-alpha-D-glucosamine biosynthesis; UDP-N-acetyl-alpha-D-glucosamine from N-acetyl-alpha-D-glucosamine 1-phosphate: step 1/1. It functions in the pathway bacterial outer membrane biogenesis; LPS lipid A biosynthesis. In terms of biological role, catalyzes the last two sequential reactions in the de novo biosynthetic pathway for UDP-N-acetylglucosamine (UDP-GlcNAc). The C-terminal domain catalyzes the transfer of acetyl group from acetyl coenzyme A to glucosamine-1-phosphate (GlcN-1-P) to produce N-acetylglucosamine-1-phosphate (GlcNAc-1-P), which is converted into UDP-GlcNAc by the transfer of uridine 5-monophosphate (from uridine 5-triphosphate), a reaction catalyzed by the N-terminal domain. This chain is Bifunctional protein GlmU, found in Vibrio cholerae serotype O1 (strain M66-2).